We begin with the raw amino-acid sequence, 401 residues long: N-acetyllactosaminide beta-1,6-N-acetylglucosaminyl-transferase (401 aa).

The Cytoplasmic segment spans residues 1-7 (MPPSVRY). A helical; Signal-anchor for type II membrane protein membrane pass occupies residues 8–28 (FFIVSVTTVIVFIVLYVLSFG). The Lumenal segment spans residues 29-401 (GDQSYQKLNI…EIAIQPSWYF (373 aa)). Asn-37, Asn-255, Asn-315, and Asn-389 each carry an N-linked (GlcNAc...) asparagine glycan.

The protein belongs to the glycosyltransferase 14 family.

It localises to the golgi apparatus membrane. It catalyses the reaction a beta-D-Gal-(1-&gt;4)-beta-D-GlcNAc-(1-&gt;3)-beta-D-Gal-(1-&gt;4)-beta-D-GlcNAc derivative + UDP-N-acetyl-alpha-D-glucosamine = a beta-D-Gal-(1-&gt;4)-beta-D-GlcNAc-(1-&gt;3)-[beta-D-GlcNAc-(1-&gt;6)]-beta-D-Gal-(1-&gt;4)-N-acetyl-beta-D-glucosaminyl derivative + UDP + H(+). Its pathway is protein modification; protein glycosylation. Branching enzyme that converts linear into branched poly-N-acetyllactosaminoglycans. Introduces the blood group I antigen during embryonic development. It is closely associated with the development and maturation of erythroid cells. The protein is N-acetyllactosaminide beta-1,6-N-acetylglucosaminyl-transferase (Gcnt2) of Mus musculus (Mouse).